The sequence spans 157 residues: Endoribonuclease YbeY (157 aa).

3 residues coordinate Zn(2+): His114, His118, and His124.

It belongs to the endoribonuclease YbeY family. Requires Zn(2+) as cofactor.

Its subcellular location is the cytoplasm. Its function is as follows. Single strand-specific metallo-endoribonuclease involved in late-stage 70S ribosome quality control and in maturation of the 3' terminus of the 16S rRNA. This chain is Endoribonuclease YbeY, found in Yersinia pseudotuberculosis serotype O:3 (strain YPIII).